The sequence spans 596 residues: Probable tripeptidyl-peptidase SED2 (596 aa).

The signal sequence occupies residues 1–16 (MRLLKFVCLLASVAAA). A propeptide spans 17 to 203 (KPTPGASHKV…LESMSVEEFA (187 aa)) (removed in mature form). Residues 210–596 (LVTTACLREL…NFQALTKVLP (387 aa)) form the Peptidase S53 domain. Asn-265 carries N-linked (GlcNAc...) asparagine glycosylation. Active-site charge relay system residues include Glu-286 and Asp-290. An N-linked (GlcNAc...) asparagine glycan is attached at Asn-403. Ser-501 serves as the catalytic Charge relay system. Ca(2+) contacts are provided by Asp-543 and Ile-544. An N-linked (GlcNAc...) asparagine glycan is attached at Asn-572. Ca(2+) is bound by residues Gly-576 and Asp-578.

Requires Ca(2+) as cofactor.

It localises to the secreted. It is found in the extracellular space. The catalysed reaction is Release of an N-terminal tripeptide from a polypeptide.. Its function is as follows. Secreted tripeptidyl-peptidase which degrades proteins at acidic pHs and is involved in virulence. The polypeptide is Probable tripeptidyl-peptidase SED2 (SED2) (Trichophyton verrucosum (strain HKI 0517)).